Reading from the N-terminus, the 385-residue chain is 2-oxoglutarate-dependent dioxygenase AFUA_1G01000 (385 aa).

Residues 203 to 327 (PSDDFLRLLR…RYSVLVGTRP (125 aa)) form the Fe2OG dioxygenase domain. Fe cation-binding residues include His-230, Asp-232, and His-304. A 2-oxoglutarate-binding site is contributed by Arg-318.

It belongs to the iron/ascorbate-dependent oxidoreductase family. Fe(2+) serves as cofactor.

2-oxoglutarate-dependent dioxygenase; part of the gene cluster that mediates the biosynthesis of fumigermin that inhibits germination of spores of the inducing S.rapamycinicus, and thus helps the fungus to defend resources in the shared habitat against a bacterial competitor. The partially reducing polyketide synthase fngA alone is sufficient for the production of fumigermin. FgnA catalyzes the condensation of 3 malonyl-CoA units to an acetyl-CoA starter, and 3 methylations to yield fumigermin. It is remarkable that the five cluster genes including fgnA are conserved in distantly related fungi, supporting the assumption of a fumigermin cluster; it is thus possible that originally all five genes were functional, but that the genes encoding tailoring enzymes became inactive from mutations, similar to the case of the fgnA gene in strains A1163 and Af293. In Aspergillus fumigatus (strain ATCC MYA-4609 / CBS 101355 / FGSC A1100 / Af293) (Neosartorya fumigata), this protein is 2-oxoglutarate-dependent dioxygenase AFUA_1G01000.